Here is a 508-residue protein sequence, read N- to C-terminus: MLLWSLLVIFDAVTEQADSLTLVAPSSVFEGDSIVLKCQGEQNWKIQKMAYHKDNKELSVFKKFSDFLIQSAVLSDSGNYFCSTKGQLFLWDKTSNIVKIKVQELFQRPVLTASSFQPIEGGPVSLKCETRLSPQRLDVQLQFCFFRENQVLGSGWSSSPELQISAVWSEDTGSYWCKAETVTHRIRKQSLQSQIHVQRIPISNVSLEIRAPGGQVTEGQKLILLCSVAGGTGNVTFSWYREATGTSMGKKTQRSLSAELEIPAVKESDAGKYYCRADNGHVPIQSKVVNIPVRIPVSRPVLTLRSPGAQAAVGDLLELHCEALRGSPPILYQFYHEDVTLGNSSAPSGGGASFNLSLTAEHSGNYSCEANNGLGAQCSEAVPVSISGPDGYRRDLMTAGVLWGLFGVLGFTGVALLLYALFHKISGESSATNEPRGASRPNPQEFTYSSPTPDMEELQPVYVNVGSVDVDVVYSQVWSMQQPESSANIRTLLENKDSQVIYSSVKKS.

Positions 1–19 are cleaved as a signal peptide; sequence MLLWSLLVIFDAVTEQADS. Ig-like C2-type domains are found at residues 20–98, 109–187, 201–290, and 300–387; these read LTLV…SNIV, PVLT…HRIR, PISN…KVVN, and PVLT…VSIS. Residues 20 to 401 are Extracellular-facing; sequence LTLVAPSSVF…YRRDLMTAGV (382 aa). A disulfide bridge connects residues cysteine 128 and cysteine 177. Residues asparagine 204, asparagine 234, asparagine 343, asparagine 355, and asparagine 365 are each glycosylated (N-linked (GlcNAc...) asparagine). Disulfide bonds link cysteine 226–cysteine 275 and cysteine 321–cysteine 368. Residues 402 to 422 form a helical membrane-spanning segment; sequence LWGLFGVLGFTGVALLLYALF. Topologically, residues 423-508 are cytoplasmic; the sequence is HKISGESSAT…QVIYSSVKKS (86 aa). Residues 429–453 are disordered; sequence SSATNEPRGASRPNPQEFTYSSPTP. The segment covering 441 to 452 has biased composition (polar residues); that stretch reads PNPQEFTYSSPT. 4 consecutive short sequence motifs (ITIM motif) follow at residues 446-451, 460-465, 472-477, and 500-505; these read FTYSSP, PVYVNV, VVYSQV, and VIYSSV.

In terms of assembly, the tyrosine-phosphorylated isoform 2 interacts with PTPN6. Post-translationally, isoform 2 is N- and O-glycosylated, and phosphorylated. Expressed in the secondary lymphoid organs, spleen and lymph node. Expression is limited to the mature B-cell lines. Highly expressed in CD19 and within the mantle zones of the tonsil tissue. Isoform 2 is expressed in the spleen, peripheral blood and bone marrow. Isoform 2 and isoform 4 are expressed in B-cell lines. Preferentially expressed in memory B-cells (at protein level).

The protein resides in the cell membrane. In terms of biological role, may have an regulatory role in normal and neoplastic B cell development. This Homo sapiens (Human) protein is Fc receptor-like protein 2 (FCRL2).